Reading from the N-terminus, the 372-residue chain is Inner membrane protein YbiR (372 aa).

The Periplasmic segment spans residues Met-1–Arg-13. Transmembrane regions (helical) follow at residues Phe-14–Lys-34 and Ser-35–Thr-55. Residues Lys-56–Met-85 are Periplasmic-facing. The helical transmembrane segment at Val-86–Val-106 threads the bilayer. The Cytoplasmic segment spans residues Pro-107–Arg-122. A helical transmembrane segment spans residues Leu-123–Pro-143. Over Gln-144–Ser-155 the chain is Periplasmic. The chain crosses the membrane as a helical span at residues Phe-156–Leu-176. The Cytoplasmic segment spans residues Leu-177 to Gly-208. A helical transmembrane segment spans residues Leu-209 to Val-229. The Periplasmic segment spans residues Ala-230–Thr-247. Residues Leu-248 to Leu-268 form a helical membrane-spanning segment. Residues Gln-269 to Leu-283 are Cytoplasmic-facing. The chain crosses the membrane as a helical span at residues Trp-284–Leu-304. The Periplasmic segment spans residues Asn-305 to Pro-309. A helical membrane pass occupies residues Ser-310–Ala-330. Over Asn-331 to His-348 the chain is Cytoplasmic. Residues Leu-349–Leu-369 form a helical membrane-spanning segment. At Pro-370–Asn-372 the chain is on the periplasmic side.

Belongs to the CitM (TC 2.A.11) transporter family.

It localises to the cell inner membrane. The polypeptide is Inner membrane protein YbiR (ybiR) (Escherichia coli (strain K12)).